Consider the following 371-residue polypeptide: Cytochrome b (371 aa).

The next 4 membrane-spanning stretches (helical) occupy residues 25–45 (FGSM…FLAI), 69–90 (WIMQ…YIHI), 105–125 (WLSG…GYVL), and 170–190 (FFAL…IHIM). Heme b is bound by residues His75 and His89. 2 residues coordinate heme b: His174 and His188. A ubiquinone is bound at residue His193. 4 consecutive transmembrane segments (helical) span residues 218-238 (HKDI…MSFS), 280-300 (LGGT…PFTH), 312-332 (IMQL…WAAT), and 339-358 (FTII…IMNP).

It belongs to the cytochrome b family. The cytochrome bc1 complex contains 3 respiratory subunits (MT-CYB, CYC1 and UQCRFS1), 2 core proteins (UQCRC1 and UQCRC2) and probably 6 low-molecular weight proteins. Requires heme b as cofactor.

The protein localises to the mitochondrion inner membrane. Functionally, component of the ubiquinol-cytochrome c reductase complex (complex III or cytochrome b-c1 complex) that is part of the mitochondrial respiratory chain. The b-c1 complex mediates electron transfer from ubiquinol to cytochrome c. Contributes to the generation of a proton gradient across the mitochondrial membrane that is then used for ATP synthesis. The polypeptide is Cytochrome b (MT-CYB) (Coluber constrictor (Eastern racer)).